The following is a 138-amino-acid chain: Nucleoside diphosphate kinase (138 aa).

The ATP site is built by K9, F57, R85, T91, R102, and N112. The active-site Pros-phosphohistidine intermediate is the H115.

It belongs to the NDK family. As to quaternary structure, homotetramer. Mg(2+) serves as cofactor.

It localises to the cytoplasm. It catalyses the reaction a 2'-deoxyribonucleoside 5'-diphosphate + ATP = a 2'-deoxyribonucleoside 5'-triphosphate + ADP. It carries out the reaction a ribonucleoside 5'-diphosphate + ATP = a ribonucleoside 5'-triphosphate + ADP. Its function is as follows. Major role in the synthesis of nucleoside triphosphates other than ATP. The ATP gamma phosphate is transferred to the NDP beta phosphate via a ping-pong mechanism, using a phosphorylated active-site intermediate. The protein is Nucleoside diphosphate kinase of Lawsonia intracellularis (strain PHE/MN1-00).